Consider the following 164-residue polypeptide: Phosphopantetheine adenylyltransferase (164 aa).

S10 is a substrate binding site. ATP-binding positions include 10–11 (SF) and H18. The substrate site is built by K42, L74, and R88. Residues 89-91 (GLR), E99, and 124-130 (YSFLSSS) each bind ATP.

Belongs to the bacterial CoaD family. As to quaternary structure, homohexamer. Mg(2+) serves as cofactor.

The protein resides in the cytoplasm. The catalysed reaction is (R)-4'-phosphopantetheine + ATP + H(+) = 3'-dephospho-CoA + diphosphate. Its pathway is cofactor biosynthesis; coenzyme A biosynthesis; CoA from (R)-pantothenate: step 4/5. In terms of biological role, reversibly transfers an adenylyl group from ATP to 4'-phosphopantetheine, yielding dephospho-CoA (dPCoA) and pyrophosphate. The sequence is that of Phosphopantetheine adenylyltransferase from Exiguobacterium sp. (strain ATCC BAA-1283 / AT1b).